The following is a 223-amino-acid chain: Cytidylate kinase (223 aa).

12-20 (GPAGSGKST) serves as a coordination point for ATP.

The protein belongs to the cytidylate kinase family. Type 1 subfamily.

The protein resides in the cytoplasm. The catalysed reaction is CMP + ATP = CDP + ADP. The enzyme catalyses dCMP + ATP = dCDP + ADP. This is Cytidylate kinase from Onion yellows phytoplasma (strain OY-M).